The sequence spans 63 residues: uncharacterized protein (63 aa).

The first 21 residues, 1–21, serve as a signal peptide directing secretion; that stretch reads MNRALILTFVLFFALFAISSA.

This is an uncharacterized protein from Dictyostelium discoideum (Social amoeba).